We begin with the raw amino-acid sequence, 379 residues long: MSTTKRCYYETLEVDRSADDSSLKAAFRKLAMKWHPDRNPGDASSESRFKEINEAYEVLKDGDKRAAYDRYGHAAFEQGGAGGPGFGAGFASSFSDIFEDLFGMAGQRGGRGTGRERGADLRYNMEITLEDAFVGKTAQIEIPVSVTCESCSGTGAKAGTKPKTCSMCGGAGRVRQAQGFFTLERTCPGCQGRGQTIEDPCPACSGAGRIERERTLSVNIPQGVEDGTRIRLAGEGEAGLRGGPPGDLYIFLSLASHEFFQRDGADLHCRVPISMVAAALGGEIEVPTIDKGKSKVKVPSGTQSGRRFRIAAKGMPVLRSRQTGDMYVQVVVETPQNLTKRQQELLAEFEKLSSGATQPEAAGFFTKVKDFFGTRGAAS.

Residues 7–72 (CYYETLEVDR…DKRAAYDRYG (66 aa)) enclose the J domain. The CR-type zinc-finger motif lies at 135 to 213 (GKTAQIEIPV…CSGAGRIERE (79 aa)). Residues Cys148, Cys151, Cys165, Cys168, Cys187, Cys190, Cys201, and Cys204 each coordinate Zn(2+). CXXCXGXG motif repeat units lie at residues 148–155 (CESCSGTG), 165–172 (CSMCGGAG), 187–194 (CPGCQGRG), and 201–208 (CPACSGAG).

Belongs to the DnaJ family. Homodimer. Zn(2+) serves as cofactor.

The protein localises to the cytoplasm. Its function is as follows. Participates actively in the response to hyperosmotic and heat shock by preventing the aggregation of stress-denatured proteins and by disaggregating proteins, also in an autonomous, DnaK-independent fashion. Unfolded proteins bind initially to DnaJ; upon interaction with the DnaJ-bound protein, DnaK hydrolyzes its bound ATP, resulting in the formation of a stable complex. GrpE releases ADP from DnaK; ATP binding to DnaK triggers the release of the substrate protein, thus completing the reaction cycle. Several rounds of ATP-dependent interactions between DnaJ, DnaK and GrpE are required for fully efficient folding. Also involved, together with DnaK and GrpE, in the DNA replication of plasmids through activation of initiation proteins. In Rhodopseudomonas palustris (strain BisB18), this protein is Chaperone protein DnaJ.